A 637-amino-acid polypeptide reads, in one-letter code: MAMISARRYFLLGLLVLTTSAYVTVGDEGDPCQVRSDIPGICLSSSACENIRGYLKSGTLSTSQVPSCGFGAREEIICCPTVACCATDRGREVQFHATSSERSSLPEPKREPTPEPEPLPPTTTEGKRERESRLDENQNFFDFNKLLSTTVKPQKTHESLKLPTQESMKTPTHESMKMPTHESMKLPTHEPMKLPIQSVGAWGIAPSKTQPIASTQRSFMEPEWGREPRIVNRPLTTPRSRPQRPNNSNFNTNPSPNNNNLIHLVNDRLREQGMQIEPAREVPMVLQTTPTPTPAPTPTQLIDPFEPYRFRGQDRDKDTQPQEPWNDVSNNLDADPAPSIFNPAETRPTTPNPNPSRVNLPEKERPSVAACEKIRSGGKPLTVHILDGERVDRGVYPHMAAIAYNSFGSAAFRCGGSLIASRFVLTAAHCVNSDDSTPSFVRLGALNIENPEPGYQDINVIDVQIHPDYSGSSKYYDIAILQLAEDAKESDVIRPACLYTDRSDPPANYKYFVAGWGVMNVTNRAVSKILLRAALDLVPADECNASFAEQPSANRTLRRGVIASQLCAADKNQRKDACQGDSGGPLILEIDDVDGTYSIVGVISSGFGCATKTPGLYTRVSSFLDYIEGIVWPSNRF.

A signal peptide spans 1 to 26 (MAMISARRYFLLGLLVLTTSAYVTVG). The 49-residue stretch at 31 to 79 (PCQVRSDIPGICLSSSACENIRGYLKSGTLSTSQVPSCGFGAREEIICC) folds into the Clip domain. Intrachain disulfides connect Cys32–Cys78, Cys42–Cys68, and Cys48–Cys79. Disordered stretches follow at residues 95–137 (FHAT…LDEN), 152–178 (KPQK…SMKM), 216–260 (QRSF…NNNN), and 286–365 (LQTT…EKER). Positions 125 to 136 (EGKRERESRLDE) are enriched in basic and acidic residues. Residues 234–244 (PLTTPRSRPQR) are compositionally biased toward polar residues. The segment covering 245 to 260 (PNNSNFNTNPSPNNNN) has biased composition (low complexity). Positions 306-320 (EPYRFRGQDRDKDTQ) are enriched in basic and acidic residues. Over residues 321–332 (PQEPWNDVSNNL) the composition is skewed to polar residues. Disulfide bonds link Cys371–Cys497, Cys414–Cys430, Cys543–Cys567, and Cys578–Cys609. The 248-residue stretch at 385 to 632 (ILDGERVDRG…FLDYIEGIVW (248 aa)) folds into the Peptidase S1 domain. Active-site charge relay system residues include His429 and Asp477. The Charge relay system role is filled by Ser582.

It belongs to the peptidase S1 family. CLIP subfamily.

Its subcellular location is the secreted. Serine protease which, by converting prophenoloxidase 1 (PPO1) into its active form, plays an essential role in the melanization immune response to physical or septic wounding. May function in diverse PPO1-activating cascades that are negatively controlled by different serpin proteins; Spn27A and Spn28D in the hemolymph, and Spn28D and Spn77BA in the trachea. Also required in the systematic wound response by mediating the redox-dependent activation of the JNK cytoprotective cascade in neuronal tissues after integument wounding. The polypeptide is Serine protease Hayan (Drosophila melanogaster (Fruit fly)).